We begin with the raw amino-acid sequence, 283 residues long: Small ribosomal subunit protein uS3 (283 aa).

The KH type-2 domain occupies Val-39–Arg-107. The interval Pro-209–Glu-283 is disordered. Residues Leu-217–Pro-235 show a composition bias toward basic and acidic residues. Residues Pro-244–Ala-260 are compositionally biased toward low complexity.

The protein belongs to the universal ribosomal protein uS3 family. As to quaternary structure, part of the 30S ribosomal subunit. Forms a tight complex with proteins S10 and S14.

Functionally, binds the lower part of the 30S subunit head. Binds mRNA in the 70S ribosome, positioning it for translation. The protein is Small ribosomal subunit protein uS3 of Herminiimonas arsenicoxydans.